A 236-amino-acid polypeptide reads, in one-letter code: Uridylate kinase (236 aa).

Position 12–15 (12–15 (KISG)) interacts with ATP. The segment at 20 to 25 (GKKGFG) is involved in allosteric activation by GTP. Gly-54 is a UMP binding site. Positions 55 and 59 each coordinate ATP. UMP is bound by residues Asp-72 and 133 to 140 (TGNPYFST). Residues Tyr-166 and Asp-169 each coordinate ATP.

This sequence belongs to the UMP kinase family. In terms of assembly, homohexamer.

Its subcellular location is the cytoplasm. It catalyses the reaction UMP + ATP = UDP + ADP. Its pathway is pyrimidine metabolism; CTP biosynthesis via de novo pathway; UDP from UMP (UMPK route): step 1/1. Its activity is regulated as follows. Allosterically activated by GTP. Inhibited by UTP. Functionally, catalyzes the reversible phosphorylation of UMP to UDP. The chain is Uridylate kinase from Clostridium novyi (strain NT).